A 533-amino-acid polypeptide reads, in one-letter code: Putative phosphate permease jhp_1384 (533 aa).

The next 12 helical transmembrane spans lie at Ile23–Ala43, Gly47–Asn67, Ala81–Ile101, Val129–Ala149, Ser156–Trp176, Ile182–Met202, Val221–Val241, Val248–Phe268, Val286–Gly306, Val338–Gly358, Leu372–Ser392, and Leu509–Ile529.

This sequence belongs to the inorganic phosphate transporter (PiT) (TC 2.A.20) family.

It is found in the cell membrane. Potential transporter for phosphate. The protein is Putative phosphate permease jhp_1384 of Helicobacter pylori (strain J99 / ATCC 700824) (Campylobacter pylori J99).